Here is a 249-residue protein sequence, read N- to C-terminus: uncharacterized protein (249 aa).

6 residues coordinate a divalent metal cation: His-10, His-12, Glu-95, His-129, His-150, and Asp-198.

This sequence belongs to the metallo-dependent hydrolases superfamily. TatD-type hydrolase family. A divalent metal cation is required as a cofactor.

This is an uncharacterized protein from Methanocaldococcus jannaschii (strain ATCC 43067 / DSM 2661 / JAL-1 / JCM 10045 / NBRC 100440) (Methanococcus jannaschii).